The following is a 396-amino-acid chain: S-adenosylmethionine synthase (396 aa).

His16 is a binding site for ATP. Asp18 is a Mg(2+) binding site. Glu44 contributes to the K(+) binding site. Positions 57 and 100 each coordinate L-methionine. Residues 100–110 (QSVDIAQGVDR) form a flexible loop region. ATP-binding positions include 165-167 (DAK), Asp240, 246-247 (RK), Ala263, and Lys267. Position 240 (Asp240) interacts with L-methionine. Residue Lys271 participates in L-methionine binding.

It belongs to the AdoMet synthase family. In terms of assembly, homotetramer; dimer of dimers. Mg(2+) is required as a cofactor. The cofactor is K(+).

Its subcellular location is the cytoplasm. The enzyme catalyses L-methionine + ATP + H2O = S-adenosyl-L-methionine + phosphate + diphosphate. It participates in amino-acid biosynthesis; S-adenosyl-L-methionine biosynthesis; S-adenosyl-L-methionine from L-methionine: step 1/1. Catalyzes the formation of S-adenosylmethionine (AdoMet) from methionine and ATP. The overall synthetic reaction is composed of two sequential steps, AdoMet formation and the subsequent tripolyphosphate hydrolysis which occurs prior to release of AdoMet from the enzyme. The chain is S-adenosylmethionine synthase from Pseudomonas syringae pv. syringae (strain B728a).